The following is a 278-amino-acid chain: Urease accessory protein UreD (278 aa).

The protein belongs to the UreD family. In terms of assembly, ureD, UreF and UreG form a complex that acts as a GTP-hydrolysis-dependent molecular chaperone, activating the urease apoprotein by helping to assemble the nickel containing metallocenter of UreC. The UreE protein probably delivers the nickel.

The protein resides in the cytoplasm. Required for maturation of urease via the functional incorporation of the urease nickel metallocenter. This chain is Urease accessory protein UreD, found in Staphylococcus aureus (strain JH1).